A 308-amino-acid polypeptide reads, in one-letter code: Taste receptor type 2 member 41 (308 aa).

The Extracellular segment spans residues 1 to 7; sequence MLPTLSV. A helical transmembrane segment spans residues 8–28; the sequence is FFMLTFVLLCFLGILANGFIV. Residues 29 to 60 lie on the Cytoplasmic side of the membrane; sequence LMLSREWLLRGRLLPSDMILFSLGTSRFFQQC. A helical membrane pass occupies residues 61–81; the sequence is VGLVNSFYYFLHLVEYSGSLA. Topologically, residues 82-88 are extracellular; it reads RQLISLH. Residues 89–109 form a helical membrane-spanning segment; it reads WDFLNSATFWFCTWLSVLFCI. The Cytoplasmic portion of the chain corresponds to 110–128; it reads KIANFSHPAFLWLKWRFPA. The helical transmembrane segment at 129–149 threads the bilayer; that stretch reads LVPWFLLGSILVSVIVTLLFF. Residues 150 to 186 are Extracellular-facing; sequence WGNHTIYQAFLRRKFTGNTTFKEWNRRLEIDYFMPLK. Asn-152 and Asn-167 each carry an N-linked (GlcNAc...) asparagine glycan. Residues 187–207 form a helical membrane-spanning segment; that stretch reads VVTMSIPCSLFLVSILLLISS. The Cytoplasmic portion of the chain corresponds to 208–239; it reads LRRHSLRMQHNTHSLQDPNVQAHSRALKSLIS. Residues 240 to 260 traverse the membrane as a helical segment; that stretch reads FLVLYAVSFVSMIIDATVFIS. Residues 261–264 are Extracellular-facing; sequence SDNV. A helical membrane pass occupies residues 265-285; it reads WYWPWQIILYFCMSVHPFILI. Residues 286–308 are Cytoplasmic-facing; it reads TNNLRFRGTFRQLLLLARGFWVA.

This sequence belongs to the G-protein coupled receptor T2R family. Expressed in subsets of taste receptor cells of the tongue and palate epithelium and exclusively in gustducin-positive cells.

It localises to the membrane. Receptor that may play a role in the perception of bitterness and is gustducin-linked. May play a role in sensing the chemical composition of the gastrointestinal content. The activity of this receptor may stimulate alpha gustducin, mediate PLC-beta-2 activation and lead to the gating of TRPM5. The polypeptide is Taste receptor type 2 member 41 (Tas2r41) (Mus musculus (Mouse)).